The sequence spans 169 residues: Ribosome maturation factor RimM (169 aa).

Residues 94-168 form the PRC barrel domain; sequence EEGQYYYHQI…KVIVELLEGL (75 aa).

The protein belongs to the RimM family. Binds ribosomal protein uS19.

The protein resides in the cytoplasm. In terms of biological role, an accessory protein needed during the final step in the assembly of 30S ribosomal subunit, possibly for assembly of the head region. Essential for efficient processing of 16S rRNA. May be needed both before and after RbfA during the maturation of 16S rRNA. It has affinity for free ribosomal 30S subunits but not for 70S ribosomes. In Limosilactobacillus fermentum (strain NBRC 3956 / LMG 18251) (Lactobacillus fermentum), this protein is Ribosome maturation factor RimM.